A 505-amino-acid chain; its full sequence is Protein phosphatase 1J (505 aa).

Residues 1–103 (MLNRVRSAVA…PPDTGRRLPW (103 aa)) form a disordered region. Residues 27-50 (DLPNAASAPPAAAPEAPRSPPAKA) show a composition bias toward low complexity. S66 and S76 each carry phosphoserine. Residues 104–498 (STGYAEVINA…DDISVFVIPL (395 aa)) form the PPM-type phosphatase domain.

It belongs to the PP2C family. As to quaternary structure, interacts with UBE2I/UBC9.

It carries out the reaction O-phospho-L-seryl-[protein] + H2O = L-seryl-[protein] + phosphate. It catalyses the reaction O-phospho-L-threonyl-[protein] + H2O = L-threonyl-[protein] + phosphate. This Homo sapiens (Human) protein is Protein phosphatase 1J (PPM1J).